The chain runs to 446 residues: Phosphoglucosamine mutase (446 aa).

Catalysis depends on S99, which acts as the Phosphoserine intermediate. 4 residues coordinate Mg(2+): S99, D242, D244, and D246. The residue at position 99 (S99) is a Phosphoserine.

It belongs to the phosphohexose mutase family. The cofactor is Mg(2+). Activated by phosphorylation.

The enzyme catalyses alpha-D-glucosamine 1-phosphate = D-glucosamine 6-phosphate. Functionally, catalyzes the conversion of glucosamine-6-phosphate to glucosamine-1-phosphate. This chain is Phosphoglucosamine mutase, found in Campylobacter concisus (strain 13826).